The primary structure comprises 459 residues: MKLLVVSNRLPLTVKKSKDGFEYTKTSGGLVTGLRGISDKIRFMWLGNISGVELDEEEKKVIRKDCWEKFHSIPVFIDPVLNSNSYDGFCNAILWPIIHSFKDDVAFTIKDYNAYVEYNTIFCEEICKIVEDGDIVWVHDYHLMILPEMLRKKSDKSFKIMFFLHAQFPPAEIMETLACRREIVSGMAHSDLIAFHSFDYAINFDDTCRANKVEVRSKLDAIPIGIDPAMFRSALKEEKTVERIKELREMFRGRKILLGVDRTDYIKGMPHRVKGFQRFLEKHPEFLDNVVFLQVGVPSRTSVKEYSSYITKMNELVSETNSKFGSIESVHLYFLNKSVDFNELCALYAVSDMLLVTSLQDGMNLVALEYISCQNENNGVLLLSSNAGASTTLPAAVEVNSWNTEEIADGIHRAITMSLEERTERHEINRKAVDTFTSVEWAEKNLDGLCDDWRESLML.

2 residues coordinate D-glucose 6-phosphate: Tyr86 and Asp140. UDP is bound by residues Arg262 and Lys267. Positions 262 and 267 each coordinate UDP-alpha-D-glucose. Arg300 lines the D-glucose 6-phosphate pocket. Asp361–Glu369 is a binding site for UDP-alpha-D-glucose. Leu365–Glu369 is a UDP binding site.

It belongs to the glycosyltransferase 20 family. As to quaternary structure, component of the trehalose synthase complex.

The protein resides in the cytoplasm. The enzyme catalyses D-glucose 6-phosphate + UDP-alpha-D-glucose = alpha,alpha-trehalose 6-phosphate + UDP + H(+). In terms of biological role, synthase catalytic subunit of the trehalose synthase complex that catalyzes the production of trehalose from glucose-6-phosphate and UDP-alpha-D-glucose in a two step process. Can function independently of the complex. This is Alpha,alpha-trehalose-phosphate synthase [UDP-forming] (TPS1) from Encephalitozoon cuniculi (strain GB-M1) (Microsporidian parasite).